Reading from the N-terminus, the 264-residue chain is Thymidylate synthase (264 aa).

Arg-21 is a dUMP binding site. Residue His-51 participates in (6R)-5,10-methylene-5,6,7,8-tetrahydrofolate binding. Residue 126–127 participates in dUMP binding; the sequence is RR. Cys-146 serves as the catalytic Nucleophile. DUMP is bound by residues 166-169, Asn-177, and 207-209; these read RSCD and HLY. Residue Asp-169 coordinates (6R)-5,10-methylene-5,6,7,8-tetrahydrofolate. Residue Ala-263 participates in (6R)-5,10-methylene-5,6,7,8-tetrahydrofolate binding.

Belongs to the thymidylate synthase family. Bacterial-type ThyA subfamily. Homodimer.

It localises to the cytoplasm. The catalysed reaction is dUMP + (6R)-5,10-methylene-5,6,7,8-tetrahydrofolate = 7,8-dihydrofolate + dTMP. The protein operates within pyrimidine metabolism; dTTP biosynthesis. Its function is as follows. Catalyzes the reductive methylation of 2'-deoxyuridine-5'-monophosphate (dUMP) to 2'-deoxythymidine-5'-monophosphate (dTMP) while utilizing 5,10-methylenetetrahydrofolate (mTHF) as the methyl donor and reductant in the reaction, yielding dihydrofolate (DHF) as a by-product. This enzymatic reaction provides an intracellular de novo source of dTMP, an essential precursor for DNA biosynthesis. This Shigella dysenteriae serotype 1 (strain Sd197) protein is Thymidylate synthase.